The primary structure comprises 318 residues: Methionyl-tRNA formyltransferase (318 aa).

117 to 120 (SLLP) contacts (6S)-5,6,7,8-tetrahydrofolate.

This sequence belongs to the Fmt family.

It carries out the reaction L-methionyl-tRNA(fMet) + (6R)-10-formyltetrahydrofolate = N-formyl-L-methionyl-tRNA(fMet) + (6S)-5,6,7,8-tetrahydrofolate + H(+). Attaches a formyl group to the free amino group of methionyl-tRNA(fMet). The formyl group appears to play a dual role in the initiator identity of N-formylmethionyl-tRNA by promoting its recognition by IF2 and preventing the misappropriation of this tRNA by the elongation apparatus. The sequence is that of Methionyl-tRNA formyltransferase from Malacoplasma penetrans (strain HF-2) (Mycoplasma penetrans).